Here is a 251-residue protein sequence, read N- to C-terminus: Coproheme decarboxylase (251 aa).

Residues arginine 133, 147-151, histidine 174, glutamine 187, and serine 225 each bind Fe-coproporphyrin III; that span reads YPMSK. The active site involves tyrosine 147.

It belongs to the ChdC family. Type 1 subfamily. It depends on Fe-coproporphyrin III as a cofactor.

It carries out the reaction Fe-coproporphyrin III + 2 H2O2 + 2 H(+) = heme b + 2 CO2 + 4 H2O. The catalysed reaction is Fe-coproporphyrin III + H2O2 + H(+) = harderoheme III + CO2 + 2 H2O. The enzyme catalyses harderoheme III + H2O2 + H(+) = heme b + CO2 + 2 H2O. It participates in porphyrin-containing compound metabolism; protoheme biosynthesis. Involved in coproporphyrin-dependent heme b biosynthesis. Catalyzes the decarboxylation of Fe-coproporphyrin III (coproheme) to heme b (protoheme IX), the last step of the pathway. The reaction occurs in a stepwise manner with a three-propionate intermediate. This chain is Coproheme decarboxylase, found in Listeria monocytogenes serotype 4a (strain HCC23).